A 153-amino-acid polypeptide reads, in one-letter code: Acylphosphatase-like protein MJ0553 (153 aa).

The Acylphosphatase-like domain occupies 4–102 (TYELIIYGRV…SRLSSDDILE (99 aa)).

This Methanocaldococcus jannaschii (strain ATCC 43067 / DSM 2661 / JAL-1 / JCM 10045 / NBRC 100440) (Methanococcus jannaschii) protein is Acylphosphatase-like protein MJ0553.